We begin with the raw amino-acid sequence, 381 residues long: Acetylornithine deacetylase (381 aa).

Zn(2+) is bound at residue His-79. Residue Asp-81 is part of the active site. Residue Asp-111 participates in Zn(2+) binding. Glu-143 is a catalytic residue. Residues Glu-144, Glu-168, and His-354 each contribute to the Zn(2+) site.

It belongs to the peptidase M20A family. ArgE subfamily. As to quaternary structure, homodimer. The cofactor is Zn(2+). Requires Co(2+) as cofactor. Glutathione serves as cofactor.

The protein localises to the cytoplasm. The catalysed reaction is N(2)-acetyl-L-ornithine + H2O = L-ornithine + acetate. It participates in amino-acid biosynthesis; L-arginine biosynthesis; L-ornithine from N(2)-acetyl-L-ornithine (linear): step 1/1. Its function is as follows. Catalyzes the hydrolysis of the amide bond of N(2)-acetylated L-amino acids. Cleaves the acetyl group from N-acetyl-L-ornithine to form L-ornithine, an intermediate in L-arginine biosynthesis pathway, and a branchpoint in the synthesis of polyamines. The sequence is that of Acetylornithine deacetylase from Buchnera aphidicola subsp. Schizaphis graminum (strain Sg).